A 173-amino-acid polypeptide reads, in one-letter code: Translation initiation factor IF-3 (173 aa).

Belongs to the IF-3 family. As to quaternary structure, monomer.

It localises to the cytoplasm. In terms of biological role, IF-3 binds to the 30S ribosomal subunit and shifts the equilibrium between 70S ribosomes and their 50S and 30S subunits in favor of the free subunits, thus enhancing the availability of 30S subunits on which protein synthesis initiation begins. The polypeptide is Translation initiation factor IF-3 (Aromatoleum aromaticum (strain DSM 19018 / LMG 30748 / EbN1) (Azoarcus sp. (strain EbN1))).